The chain runs to 202 residues: LexA repressor (202 aa).

A DNA-binding region (H-T-H motif) is located at residues 28 to 48 (RAEIAQELGFKSPNAAEEHLK). Residues serine 123 and lysine 160 each act as for autocatalytic cleavage activity in the active site.

The protein belongs to the peptidase S24 family. Homodimer.

It catalyses the reaction Hydrolysis of Ala-|-Gly bond in repressor LexA.. Represses a number of genes involved in the response to DNA damage (SOS response), including recA and lexA. In the presence of single-stranded DNA, RecA interacts with LexA causing an autocatalytic cleavage which disrupts the DNA-binding part of LexA, leading to derepression of the SOS regulon and eventually DNA repair. The polypeptide is LexA repressor (Pseudomonas putida (Arthrobacter siderocapsulatus)).